We begin with the raw amino-acid sequence, 427 residues long: UPF0229 protein bll6755 (427 aa).

The interval 86–107 is disordered; it reads DYLQRSGQGSAKDSGPGEGDSE.

It belongs to the UPF0229 family.

In Bradyrhizobium diazoefficiens (strain JCM 10833 / BCRC 13528 / IAM 13628 / NBRC 14792 / USDA 110), this protein is UPF0229 protein bll6755.